Consider the following 305-residue polypeptide: Testis-expressed protein 52 (305 aa).

Positions 284–305 (HLSKAQASKSPARKRKRRPGHF) are disordered. Residues 294-305 (PARKRKRRPGHF) show a composition bias toward basic residues.

In terms of tissue distribution, expressed in Testis.

The protein is Testis-expressed protein 52 of Homo sapiens (Human).